We begin with the raw amino-acid sequence, 241 residues long: UDP-2,3-diacylglucosamine hydrolase (241 aa).

Mn(2+) is bound by residues D8, H10, D41, N79, and H114. 79 to 80 is a substrate binding site; it reads NR. Residues D122, K164, K167, and H195 each coordinate substrate. H195 and H197 together coordinate Mn(2+).

This sequence belongs to the LpxH family. Mn(2+) serves as cofactor.

It is found in the cell inner membrane. It catalyses the reaction UDP-2-N,3-O-bis[(3R)-3-hydroxytetradecanoyl]-alpha-D-glucosamine + H2O = 2-N,3-O-bis[(3R)-3-hydroxytetradecanoyl]-alpha-D-glucosaminyl 1-phosphate + UMP + 2 H(+). It participates in glycolipid biosynthesis; lipid IV(A) biosynthesis; lipid IV(A) from (3R)-3-hydroxytetradecanoyl-[acyl-carrier-protein] and UDP-N-acetyl-alpha-D-glucosamine: step 4/6. In terms of biological role, hydrolyzes the pyrophosphate bond of UDP-2,3-diacylglucosamine to yield 2,3-diacylglucosamine 1-phosphate (lipid X) and UMP by catalyzing the attack of water at the alpha-P atom. Involved in the biosynthesis of lipid A, a phosphorylated glycolipid that anchors the lipopolysaccharide to the outer membrane of the cell. The polypeptide is UDP-2,3-diacylglucosamine hydrolase (Aliivibrio fischeri (strain MJ11) (Vibrio fischeri)).